We begin with the raw amino-acid sequence, 323 residues long: Elongation factor P--(R)-beta-lysine ligase (323 aa).

76 to 78 is a binding site for substrate; the sequence is SPE. Residues 100–102 and N109 each bind ATP; that span reads RNE. Y118 serves as a coordination point for substrate. An ATP-binding site is contributed by 242–243; sequence EL. E249 serves as a coordination point for substrate. G298 provides a ligand contact to ATP.

It belongs to the class-II aminoacyl-tRNA synthetase family. EpmA subfamily. In terms of assembly, homodimer.

It catalyses the reaction D-beta-lysine + L-lysyl-[protein] + ATP = N(6)-((3R)-3,6-diaminohexanoyl)-L-lysyl-[protein] + AMP + diphosphate + H(+). Its function is as follows. With EpmB is involved in the beta-lysylation step of the post-translational modification of translation elongation factor P (EF-P). Catalyzes the ATP-dependent activation of (R)-beta-lysine produced by EpmB, forming a lysyl-adenylate, from which the beta-lysyl moiety is then transferred to the epsilon-amino group of a conserved specific lysine residue in EF-P. This Histophilus somni (strain 129Pt) (Haemophilus somnus) protein is Elongation factor P--(R)-beta-lysine ligase.